Reading from the N-terminus, the 568-residue chain is 2-succinyl-5-enolpyruvyl-6-hydroxy-3-cyclohexene-1-carboxylate synthase (568 aa).

Belongs to the TPP enzyme family. MenD subfamily. As to quaternary structure, homodimer. Requires Mg(2+) as cofactor. Mn(2+) is required as a cofactor. It depends on thiamine diphosphate as a cofactor.

The enzyme catalyses isochorismate + 2-oxoglutarate + H(+) = 5-enolpyruvoyl-6-hydroxy-2-succinyl-cyclohex-3-ene-1-carboxylate + CO2. Its pathway is quinol/quinone metabolism; 1,4-dihydroxy-2-naphthoate biosynthesis; 1,4-dihydroxy-2-naphthoate from chorismate: step 2/7. It participates in quinol/quinone metabolism; menaquinone biosynthesis. Functionally, catalyzes the thiamine diphosphate-dependent decarboxylation of 2-oxoglutarate and the subsequent addition of the resulting succinic semialdehyde-thiamine pyrophosphate anion to isochorismate to yield 2-succinyl-5-enolpyruvyl-6-hydroxy-3-cyclohexene-1-carboxylate (SEPHCHC). The protein is 2-succinyl-5-enolpyruvyl-6-hydroxy-3-cyclohexene-1-carboxylate synthase of Pasteurella multocida (strain Pm70).